The chain runs to 75 residues: Conotoxin Vt15.1 (75 aa).

Residues 1–19 (MMPVILPLLLSLAIRGGDG) form the signal peptide. A propeptide spanning residues 20-43 (QAIQGDRDLIAKLFKRYQEHGLSV) is cleaved from the precursor. Tryptophan 73 bears the Tryptophan amide mark.

It belongs to the conotoxin V superfamily. Post-translationally, contains 4 disulfide bonds. As to expression, expressed by the venom duct.

It is found in the secreted. This chain is Conotoxin Vt15.1, found in Conus planorbis (Planorbis cone).